The following is a 175-amino-acid chain: O-acetyl-ADP-ribose deacetylase (175 aa).

The 175-residue stretch at 1 to 175 (MAVQPEVILG…IYRRLLASYP (175 aa)) folds into the Macro domain. Substrate is bound by residues 11–12 (DI), asparagine 25, 33–35 (GVD), and 122–126 (STGVY). Residue aspartate 35 is the Proton acceptor of the active site.

This sequence belongs to the MacroD-type family. YmdB subfamily. As to quaternary structure, homodimer. Interacts with RNase III.

It catalyses the reaction 3''-O-acetyl-ADP-D-ribose + H2O = ADP-D-ribose + acetate + H(+). It carries out the reaction 2''-O-acetyl-ADP-D-ribose + H2O = ADP-D-ribose + acetate + H(+). Its function is as follows. Deacetylates O-acetyl-ADP ribose to yield ADP-ribose and free acetate. Down-regulates ribonuclease 3 (RNase III) activity. Acts by interacting directly with the region of the ribonuclease that is required for dimerization/activation. In Klebsiella pneumoniae (strain 342), this protein is O-acetyl-ADP-ribose deacetylase.